A 652-amino-acid polypeptide reads, in one-letter code: WD repeat-containing protein 70 (652 aa).

2 disordered regions span residues 1–22 (MERP…LAVT) and 45–171 (RRTA…IPDS). A compositionally biased stretch (basic and acidic residues) spans 45-76 (RRTAVERSRKTLEAREREEEMNREKELRRQNE). Residues 92 to 102 (SKSSSRDTSSS) are compositionally biased toward low complexity. 2 stretches are compositionally biased toward acidic residues: residues 103–115 (ESDE…DDEL) and 146–162 (EDVE…EEEE). WD repeat units lie at residues 178-217 (HGTK…ASFK), 225-266 (CECH…ECIK), 279-319 (GHTA…KQKS), 328-367 (GKKV…HPKF), 374-413 (DPGT…KPLF), 419-464 (PTMF…RVYE), and 467-506 (ITDA…QRGA). Lysine 294 is covalently cross-linked (Glycyl lysine isopeptide (Lys-Gly) (interchain with G-Cter in SUMO2)). Lysine 450 is modified (N6-acetyllysine). Residues 538–563 (REPRQRSTRKQLEKDRLDPLKSHKPE) show a composition bias toward basic and acidic residues. The disordered stretch occupies residues 538–577 (REPRQRSTRKQLEKDRLDPLKSHKPEPPVAGPGRGGRVGT). Threonine 577 bears the Phosphothreonine mark. Glycyl lysine isopeptide (Lys-Gly) (interchain with G-Cter in SUMO2) cross-links involve residues lysine 588 and lysine 594. Residues serine 619 and serine 636 each carry the phosphoserine modification. Positions 629 to 652 (TMFAQVESDDEETKNEPEWKKRKI) are disordered. The segment covering 642-652 (KNEPEWKKRKI) has biased composition (basic and acidic residues).

Belongs to the WD repeat GAD-1 family.

The sequence is that of WD repeat-containing protein 70 (WDR70) from Bos taurus (Bovine).